A 256-amino-acid polypeptide reads, in one-letter code: Myb family transcription factor MPH1 (256 aa).

The HTH myb-type domain maps to 14 to 74; it reads RSEVPRMRWT…HLQMYRSGSS (61 aa). The segment at residues 45–70 is a DNA-binding region (H-T-H motif); it reads PKRILQLMGVKGVSISHIKSHLQMYR.

Highly expressed in the pulvinus and stem nodes. Expressed in the plumule of germinating seeds, coleoptile, leaves, internodes, leave sheaths, spikes and roots.

The protein resides in the nucleus. Its function is as follows. Probable transcription factor involved in the regulation of plant height by elongating internode cell length. Involved in the positive regulation of grain yield. May be involved in the regulation of genes related to cell elongation and cell wall synthesis, which are associated with plant height and yield phenotypes. Plays a role in tolerance to cadmium stress. The protein is Myb family transcription factor MPH1 of Oryza sativa subsp. japonica (Rice).